The chain runs to 106 residues: UPF0145 protein CPE0882 (106 aa).

It belongs to the UPF0145 family.

The polypeptide is UPF0145 protein CPE0882 (Clostridium perfringens (strain 13 / Type A)).